We begin with the raw amino-acid sequence, 745 residues long: Junction plakoglobin (745 aa).

Residue methionine 1 is modified to N-acetylmethionine. O-linked (GlcNAc) threonine glycosylation is present at threonine 14. Serine 99 and serine 125 each carry phosphoserine. 12 ARM repeats span residues asparagine 132–lysine 171, lysine 172–histidine 215, arginine 216–leucine 255, glutamate 258–tyrosine 297, glycine 298–cysteine 341, proline 342–aspartate 381, alanine 383–cysteine 420, serine 423–serine 464, glutamate 470–leucine 510, proline 512–threonine 551, proline 574–glutamine 613, and lysine 615–arginine 661. The tract at residues asparagine 132–tyrosine 297 is interaction with DSC1 and DSG1. Serine 182 is modified (phosphoserine). Positions proline 574 to arginine 661 are interaction with DSC1. Residues serine 665 and serine 730 each carry the phosphoserine modification.

Belongs to the beta-catenin family. As to quaternary structure, homodimer. Component of an E-cadherin/catenin adhesion complex composed of at least E-cadherin/CDH1 and gamma-catenin/JUP, and possibly alpha-catenin/CTNNA1; the complex is located to adherens junctions. The stable association of CTNNA1 is controversial as CTNNA1 was shown not to bind to F-actin when assembled in the complex. Interacts with MUC1. Interacts with CAV1. Interacts with PTPRJ. Interacts with DSG1. Interacts with DSC1 and DSC2. Interacts with PKP2. Interacts with PKP3 (via N-terminus); the interaction is required for PKP3 localization to desmosome cell-cell junctions. Interacts with DSG4. In terms of processing, may be phosphorylated by FER. In terms of tissue distribution, expressed in the heart (at protein level).

Its subcellular location is the cell junction. It localises to the adherens junction. The protein resides in the desmosome. The protein localises to the cytoplasm. It is found in the cytoskeleton. Its subcellular location is the cell membrane. It localises to the nucleus. Its function is as follows. Common junctional plaque protein. The membrane-associated plaques are architectural elements in an important strategic position to influence the arrangement and function of both the cytoskeleton and the cells within the tissue. The presence of plakoglobin in both the desmosomes and in the intermediate junctions suggests that it plays a central role in the structure and function of submembranous plaques. Acts as a substrate for VE-PTP and is required by it to stimulate VE-cadherin function in endothelial cells. Can replace beta-catenin in E-cadherin/catenin adhesion complexes which are proposed to couple cadherins to the actin cytoskeleton. The chain is Junction plakoglobin from Rattus norvegicus (Rat).